The sequence spans 283 residues: Cytosolic Fe-S cluster assembly factor CFD1 (283 aa).

26–33 (GKGGVGKS) serves as a coordination point for ATP. Positions 202 and 205 each coordinate [4Fe-4S] cluster.

Belongs to the Mrp/NBP35 ATP-binding proteins family. NUBP2/CFD1 subfamily. As to quaternary structure, heterotetramer of 2 NBP35 and 2 CFD1 chains. [4Fe-4S] cluster serves as cofactor.

Its subcellular location is the cytoplasm. Its function is as follows. Component of the cytosolic iron-sulfur (Fe/S) protein assembly (CIA) machinery. Required for maturation of extramitochondrial Fe-S proteins. The NBP35-CFD1 heterotetramer forms a Fe-S scaffold complex, mediating the de novo assembly of an Fe-S cluster and its transfer to target apoproteins. Required for biogenesis and export of both ribosomal subunits, which may reflect a role in assembly of the Fe/S clusters in RLI1, a protein which performs rRNA processing and ribosome export. This is Cytosolic Fe-S cluster assembly factor CFD1 from Kluyveromyces lactis (strain ATCC 8585 / CBS 2359 / DSM 70799 / NBRC 1267 / NRRL Y-1140 / WM37) (Yeast).